Consider the following 984-residue polypeptide: Calsyntenin-1 (984 aa).

An N-terminal signal peptide occupies residues 1–18; that stretch reads MRTAYFIFVGALLGVSYA. The Extracellular portion of the chain corresponds to 19–850; sequence KHHHAARAPI…VGQGAIAGGA (832 aa). 2 Cadherin domains span residues 66–142 and 143–257; these read YLLT…APEI and ENPW…APGV. 2 N-linked (GlcNAc...) asparagine glycosylation sites follow: asparagine 206 and asparagine 305. A helical transmembrane segment spans residues 851–871; the sequence is VAVVVVVCVGFLLVLLVIGVL. The Cytoplasmic segment spans residues 872 to 984; that stretch reads KMRDTPMPRR…ISTNARSYRV (113 aa). The segment at 878–959 is disordered; sequence MPRRRRQKRQ…QTEVLPHLDA (82 aa). Basic and acidic residues predominate over residues 886-896; sequence RQSDGGMHWDD. Over residues 918 to 951 the composition is skewed to acidic residues; sequence EFSDEEEEEETDGESECSYRDEEDDVSEDEEDQT.

Belongs to the calsyntenin family. Interacts with isoform c of daf-2 (daf-2c); promoting daf-2c localization to synaptic regions. Interacts with klc-2. Interacts with unc-104. In terms of processing, a proportion of the protein is proteolytically cleaved before the transmembrane domain in neurons, leading to release in the extracellular space. As to expression, widely expressed in the nervous system. Highly expressed in many head neurons, including most amphid sensory neurons. Also expressed in other tissues, such as intestine and gonadal sheath cells.

The protein localises to the golgi apparatus membrane. It localises to the perikaryon. Its subcellular location is the cell projection. The protein resides in the axon. It is found in the secreted. The protein localises to the synaptic cleft. Its function is as follows. Cell adhesion molecule involved in associative learning and memory. Acts as a regulator of GABAergic synaptic transmission at neuromuscular junctions by regulating GABA synaptic vesicle precursor transport: possibly functions as a cargo adapter for unc-104-mediated transport of synaptic vesicle precursors. Promotes localization of isoform c of daf-2 (daf-2c) to synaptic regions by acting as a signaling adapter between klc-2 and daf-2c. Acts as aregulator of glutamate signaling in the sensory neurons by inhibiting the activity of command interneurons, thereby negatively regulating motor circuit activity and locomotion. This chain is Calsyntenin-1, found in Caenorhabditis elegans.